A 204-amino-acid chain; its full sequence is Guanylate kinase (204 aa).

The region spanning 18-198 (GKLIIFSAPS…AKAETLEVIK (181 aa)) is the Guanylate kinase-like domain. 25–32 (APSGSGKS) serves as a coordination point for ATP.

Belongs to the guanylate kinase family.

The protein localises to the cytoplasm. It carries out the reaction GMP + ATP = GDP + ADP. Essential for recycling GMP and indirectly, cGMP. The chain is Guanylate kinase from Bacteroides thetaiotaomicron (strain ATCC 29148 / DSM 2079 / JCM 5827 / CCUG 10774 / NCTC 10582 / VPI-5482 / E50).